We begin with the raw amino-acid sequence, 67 residues long: Conotoxin AbVIM (67 aa).

The first 17 residues, 1–17, serve as a signal peptide directing secretion; the sequence is VLIIAVLFLTACQLIAT. Positions 18 to 40 are excised as a propeptide; sequence ASYARSERKHPDLRLSSRNSKLS. Disulfide bonds link Cys43–Cys57, Cys50–Cys61, and Cys56–Cys66.

It belongs to the conotoxin O1 superfamily. As to expression, expressed by the venom duct.

It is found in the secreted. The sequence is that of Conotoxin AbVIM from Conus abbreviatus (Abbreviated cone).